The following is a 480-amino-acid chain: Phenolic acid decarboxylase (480 aa).

Asn163, His185, and Glu227 together coordinate Mn(2+). Residues 163–168 (NVGTYR) and 184–185 (MH) contribute to the prenylated FMN site. Glu278 acts as the Proton donor in catalysis. The disordered stretch occupies residues 443–466 (TTPVPPEPNPRETQLLDPPDGTEE).

It belongs to the UbiD family. YclC subfamily. Homohexamer. The cofactor is prenylated FMN. It depends on Mn(2+) as a cofactor.

The enzyme catalyses 4-hydroxybenzoate + H(+) = phenol + CO2. The catalysed reaction is 3,4-dihydroxybenzoate + H(+) = catechol + CO2. With respect to regulation, inhibited by Zn(2+), (2,3,4)-trihydroxybenzoate and (3,4,5)-trihydroxybenzoate. Ammonium and rubidium ions decrease the activity of the carboxylation of 3,4-dihydroxybenzoate by about 20%. Its function is as follows. Involved in the non-oxidative decarboxylation and detoxification of phenolic derivatives under anaerobic conditions. Oxygen-sensitive phenolic acid decarboxylase that catalyzes the reversible decarboxylation of 4-hydroxybenzoate and 3,4-dihydroxybenzoate. This chain is Phenolic acid decarboxylase, found in Sedimentibacter hydroxybenzoicus (Clostridium hydroxybenzoicum).